Consider the following 131-residue polypeptide: Histone H2A.2 (131 aa).

The interval 1-22 (MSGGKGKAGSSEKASTSRSAKA) is disordered. At serine 2 the chain carries N-acetylserine. An N6-acetyllysine mark is found at lysine 5 and lysine 7. Position 105 is an N5-methylglutamine (glutamine 105). Lysine 126 participates in a covalent cross-link: Glycyl lysine isopeptide (Lys-Gly) (interchain with G-Cter in SUMO). A Phosphoserine modification is found at serine 128. A [ST]-Q motif motif is present at residues 128-129 (SQ).

This sequence belongs to the histone H2A family. The nucleosome is a histone octamer containing two molecules each of H2A, H2B, H3 and H4 assembled in one H3-H4 heterotetramer and two H2A-H2B heterodimers. The octamer wraps approximately 147 bp of DNA. In terms of processing, phosphorylated to form H2AS128ph (gamma-H2A) in response to DNA double-strand breaks (DSBs) generated by exogenous genotoxic agents and by stalled replication forks. Phosphorylation is dependent on the DNA damage checkpoint kinases MEC1/ATR and TEL1/ATM, spreads on either side of a detected DSB site and may mark the surrounding chromatin for recruitment of proteins required for DNA damage signaling and repair. Gamma-H2A is removed from the DNA prior to the strand invasion-primer extension step of the repair process and subsequently dephosphorylated. Dephosphorylation is necessary for efficient recovery from the DNA damage checkpoint. Acetylated by ESA1 to form H2AK4ac and H2AK7ac.

The protein resides in the nucleus. It localises to the chromosome. Its function is as follows. Core component of nucleosome which plays a central role in DNA double strand break (DSB) repair. Nucleosomes wrap and compact DNA into chromatin, limiting DNA accessibility to the cellular machineries which require DNA as a template. Histones thereby play a central role in transcription regulation, DNA repair, DNA replication and chromosomal stability. DNA accessibility is regulated via a complex set of post-translational modifications of histones, also called histone code, and nucleosome remodeling. This chain is Histone H2A.2 (HTA2), found in Scheffersomyces stipitis (strain ATCC 58785 / CBS 6054 / NBRC 10063 / NRRL Y-11545) (Yeast).